Reading from the N-terminus, the 362-residue chain is Phosphoserine aminotransferase (362 aa).

Arginine 43 contributes to the L-glutamate binding site. Pyridoxal 5'-phosphate is bound by residues 77–78, tryptophan 103, threonine 153, aspartate 173, and glutamine 196; that span reads AR. An N6-(pyridoxal phosphate)lysine modification is found at lysine 197.

It belongs to the class-V pyridoxal-phosphate-dependent aminotransferase family. SerC subfamily. As to quaternary structure, homodimer. Pyridoxal 5'-phosphate is required as a cofactor.

It localises to the cytoplasm. It catalyses the reaction O-phospho-L-serine + 2-oxoglutarate = 3-phosphooxypyruvate + L-glutamate. The catalysed reaction is 4-(phosphooxy)-L-threonine + 2-oxoglutarate = (R)-3-hydroxy-2-oxo-4-phosphooxybutanoate + L-glutamate. Its pathway is amino-acid biosynthesis; L-serine biosynthesis; L-serine from 3-phospho-D-glycerate: step 2/3. It functions in the pathway cofactor biosynthesis; pyridoxine 5'-phosphate biosynthesis; pyridoxine 5'-phosphate from D-erythrose 4-phosphate: step 3/5. Catalyzes the reversible conversion of 3-phosphohydroxypyruvate to phosphoserine and of 3-hydroxy-2-oxo-4-phosphonooxybutanoate to phosphohydroxythreonine. This chain is Phosphoserine aminotransferase, found in Legionella pneumophila (strain Paris).